The following is a 69-amino-acid chain: Conotoxin Gla-TxXI (69 aa).

The signal sequence occupies residues 1–25 (MVRVTSVGCFLLVIVSLNLVVLTNA). 4 disulfides stabilise this stretch: Cys26/Cys40, Cys33/Cys45, Cys39/Cys49, and Cys44/Cys53. Glu29 bears the 4-carboxyglutamate mark. The residue at position 56 (Pro56) is a Proline amide. Positions 60–69 (AKLLEFFRQR) are excised as a propeptide.

Contains 4 disulfide bonds. As to expression, expressed by the venom duct.

It is found in the secreted. The chain is Conotoxin Gla-TxXI from Conus textile (Cloth-of-gold cone).